The following is a 430-amino-acid chain: Agropine synthesis reductase (430 aa).

203–227 (LISGPSRGIGKAIAENLIAHGYRMS) contributes to the NAD(+) binding site. A substrate-binding site is contributed by S333. The Proton acceptor role is filled by Y346.

The protein belongs to the short-chain dehydrogenases/reductases (SDR) family.

It functions in the pathway opine metabolism; mannopine biosynthesis. Its function is as follows. Reduces deoxy-fructosyl-glutamine to mannopine. The chain is Agropine synthesis reductase (mas1) from Rhizobium rhizogenes (Agrobacterium rhizogenes).